A 112-amino-acid polypeptide reads, in one-letter code: Large ribosomal subunit protein eL33w (112 aa).

It belongs to the eukaryotic ribosomal protein eL33 family.

The sequence is that of Large ribosomal subunit protein eL33w (RPL35AA) from Arabidopsis thaliana (Mouse-ear cress).